Consider the following 835-residue polypeptide: Leucine--tRNA ligase (835 aa).

The 'HIGH' region signature appears at 36–46 (PYPSGKIHVGH). The 'KMSKS' region motif lies at 602–606 (KMSKS). Position 605 (lysine 605) interacts with ATP.

The protein belongs to the class-I aminoacyl-tRNA synthetase family.

Its subcellular location is the cytoplasm. It catalyses the reaction tRNA(Leu) + L-leucine + ATP = L-leucyl-tRNA(Leu) + AMP + diphosphate. The sequence is that of Leucine--tRNA ligase from Rickettsia africae (strain ESF-5).